A 297-amino-acid chain; its full sequence is Octopine catabolism/uptake operon regulatory protein OccR (297 aa).

Residues 1-58 form the HTH lysR-type domain; that stretch reads MNLRQVEAFRAVMLTGQMTAAAELMLVTQPAISRLIKDFERATKLQLFERRGNHIIPT. The segment at residues 18–37 is a DNA-binding region (H-T-H motif); sequence MTAAAELMLVTQPAISRLIK.

The protein belongs to the LysR transcriptional regulatory family.

In terms of biological role, positive regulatory protein for the occ operon involved in octopine catabolism and uptake. Also acts as a negative regulator of its expression. The chain is Octopine catabolism/uptake operon regulatory protein OccR (occR) from Rhizobium meliloti (Ensifer meliloti).